Here is a 471-residue protein sequence, read N- to C-terminus: Methylenetetrahydrofolate--tRNA-(uracil-5-)-methyltransferase TrmFO (471 aa).

13–18 (GGGLAG) provides a ligand contact to FAD.

Belongs to the MnmG family. TrmFO subfamily. It depends on FAD as a cofactor.

Its subcellular location is the cytoplasm. It catalyses the reaction uridine(54) in tRNA + (6R)-5,10-methylene-5,6,7,8-tetrahydrofolate + NADH + H(+) = 5-methyluridine(54) in tRNA + (6S)-5,6,7,8-tetrahydrofolate + NAD(+). The catalysed reaction is uridine(54) in tRNA + (6R)-5,10-methylene-5,6,7,8-tetrahydrofolate + NADPH + H(+) = 5-methyluridine(54) in tRNA + (6S)-5,6,7,8-tetrahydrofolate + NADP(+). Functionally, catalyzes the folate-dependent formation of 5-methyl-uridine at position 54 (M-5-U54) in all tRNAs. The protein is Methylenetetrahydrofolate--tRNA-(uracil-5-)-methyltransferase TrmFO of Azorhizobium caulinodans (strain ATCC 43989 / DSM 5975 / JCM 20966 / LMG 6465 / NBRC 14845 / NCIMB 13405 / ORS 571).